An 80-amino-acid polypeptide reads, in one-letter code: Small ribosomal subunit protein uS17 (80 aa).

Belongs to the universal ribosomal protein uS17 family. Part of the 30S ribosomal subunit.

Its function is as follows. One of the primary rRNA binding proteins, it binds specifically to the 5'-end of 16S ribosomal RNA. In Brucella abortus (strain S19), this protein is Small ribosomal subunit protein uS17.